The sequence spans 433 residues: GTPase Obg (433 aa).

The Obg domain occupies 2–160 (PTFVDQTKIE…RVLRLELKLL (159 aa)). One can recognise an OBG-type G domain in the interval 161-334 (ADVGLVGFPS…LMNDTATLVE (174 aa)). GTP is bound by residues 167–174 (GFPSVGKS), 192–196 (FTTLT), 214–217 (DLPG), 284–287 (SQMD), and 315–317 (SSV). 2 residues coordinate Mg(2+): serine 174 and threonine 194. The region spanning 355–433 (YKAPQRNEFM…IGKFVFEFVQ (79 aa)) is the OCT domain.

The protein belongs to the TRAFAC class OBG-HflX-like GTPase superfamily. OBG GTPase family. As to quaternary structure, monomer. Mg(2+) is required as a cofactor.

The protein localises to the cytoplasm. Its function is as follows. An essential GTPase which binds GTP, GDP and possibly (p)ppGpp with moderate affinity, with high nucleotide exchange rates and a fairly low GTP hydrolysis rate. Plays a role in control of the cell cycle, stress response, ribosome biogenesis and in those bacteria that undergo differentiation, in morphogenesis control. This Lactobacillus acidophilus (strain ATCC 700396 / NCK56 / N2 / NCFM) protein is GTPase Obg.